The chain runs to 264 residues: Pyridoxine 5'-phosphate synthase (264 aa).

3-amino-2-oxopropyl phosphate is bound at residue Asn28. 30–31 (DH) is a 1-deoxy-D-xylulose 5-phosphate binding site. Residue Arg39 coordinates 3-amino-2-oxopropyl phosphate. The Proton acceptor role is filled by His64. Positions 66 and 71 each coordinate 1-deoxy-D-xylulose 5-phosphate. Catalysis depends on Glu91, which acts as the Proton acceptor. Thr121 is a 1-deoxy-D-xylulose 5-phosphate binding site. His217 functions as the Proton donor in the catalytic mechanism. Residues Gly218 and 239–240 (GH) each bind 3-amino-2-oxopropyl phosphate.

This sequence belongs to the PNP synthase family. In terms of assembly, homooctamer; tetramer of dimers.

Its subcellular location is the cytoplasm. It catalyses the reaction 3-amino-2-oxopropyl phosphate + 1-deoxy-D-xylulose 5-phosphate = pyridoxine 5'-phosphate + phosphate + 2 H2O + H(+). Its pathway is cofactor biosynthesis; pyridoxine 5'-phosphate biosynthesis; pyridoxine 5'-phosphate from D-erythrose 4-phosphate: step 5/5. In terms of biological role, catalyzes the complicated ring closure reaction between the two acyclic compounds 1-deoxy-D-xylulose-5-phosphate (DXP) and 3-amino-2-oxopropyl phosphate (1-amino-acetone-3-phosphate or AAP) to form pyridoxine 5'-phosphate (PNP) and inorganic phosphate. This is Pyridoxine 5'-phosphate synthase from Psychrobacter arcticus (strain DSM 17307 / VKM B-2377 / 273-4).